The sequence spans 117 residues: UPF0102 protein FTF0898c (117 aa).

Belongs to the UPF0102 family.

The protein is UPF0102 protein FTF0898c of Francisella tularensis subsp. tularensis (strain FSC 198).